The sequence spans 448 residues: Chromosomal replication initiator protein DnaA (448 aa).

Residues 1–93 (MEQIVSSLWS…KPTEQNLSAS (93 aa)) form a domain I, interacts with DnaA modulators region. Positions 94–110 (STNKEELTQDTVHKFKT) are domain II. Positions 111–328 (GLNGRLTFDN…GAINRVSAWC (218 aa)) are domain III, AAA+ region. Residues G156, G158, K159, and T160 each contribute to the ATP site. The segment at 329–448 (NFTKRQITID…YTNLTRKLSS (120 aa)) is domain IV, binds dsDNA.

It belongs to the DnaA family. In terms of assembly, oligomerizes as a right-handed, spiral filament on DNA at oriC.

The protein resides in the cytoplasm. Functionally, plays an essential role in the initiation and regulation of chromosomal replication. ATP-DnaA binds to the origin of replication (oriC) to initiate formation of the DNA replication initiation complex once per cell cycle. Binds the DnaA box (a 9 base pair repeat at the origin) and separates the double-stranded (ds)DNA. Forms a right-handed helical filament on oriC DNA; dsDNA binds to the exterior of the filament while single-stranded (ss)DNA is stabiized in the filament's interior. The ATP-DnaA-oriC complex binds and stabilizes one strand of the AT-rich DNA unwinding element (DUE), permitting loading of DNA polymerase. After initiation quickly degrades to an ADP-DnaA complex that is not apt for DNA replication. Binds acidic phospholipids. The protein is Chromosomal replication initiator protein DnaA of Haemophilus ducreyi (strain 35000HP / ATCC 700724).